The following is a 435-amino-acid chain: GTPase Der (435 aa).

EngA-type G domains follow at residues 4–167 and 175–350; these read KIVA…SKND and TKIA…QSLS. Residues 10–17, 57–61, 119–122, 181–188, 228–232, and 293–296 contribute to the GTP site; these read GRPNVGKS, DTGGI, NKYD, DTAGI, and NKWD. Residues 351 to 435 enclose the KH-like domain; it reads VKVKTYVLNE…PINLIFRERK (85 aa).

This sequence belongs to the TRAFAC class TrmE-Era-EngA-EngB-Septin-like GTPase superfamily. EngA (Der) GTPase family. Associates with the 50S ribosomal subunit.

Its function is as follows. GTPase that plays an essential role in the late steps of ribosome biogenesis. The chain is GTPase Der from Mycoplasma mycoides subsp. mycoides SC (strain CCUG 32753 / NCTC 10114 / PG1).